Consider the following 685-residue polypeptide: MDEDKGKRDPIQMSLKGCRTNNGFVQNEDIPEQDPDPGSRDTPQPNAVSIPAPEEPHLKAVRPYAGMPKEVLFQFSGQARYRVPREILFWLTVVSVFLLIGATIAIIVISPKCLDWWQAGPIYQIYPRSFKDSDKDGNGDLKGIQEKLDYITALNIKTLWITSFYKSSLKDFRYAVEDFKEIDPIFGTMKDFENLVAAIHDKGLKLIIDFIPNHTSDKHPWFQSSRTRSGKYTDYYIWHNCTHVNGVTTPPNNWLSVYGNSSWHFDEVRKQCYFHQFLKEQPDLNFRNPAVQEEIKEIITFWLSKGVDGFSFDAVKFLLEAKDLRNEIQVNTSQIPDTVTHYSELYHDFTTTQVGMHDIVRDFRQTMNQYSREPGRYRFMGAEASAESIERTMMYYGLPFIQEADFPFNKYFTTIGTLSGHTVYEVITSWMENMPEGKWPNWMTGGPETPRLTSRVGSEYVNAMHMLLFTLPGTPITYYGEEIGMGDISVTNFNESYDSTTLVSKSPMQWDNSSNAGFTEANHTWLPTNSDYHTVNVDVQKTQPSSALRLYQDLSLLHATELVLSRGWFCLLRDDSHSVVYTRELDGIDNVFLVVLNFGESSTVLNLQGIISDLPPELRIRLSTNSASKGSAVDTRAISLEKGEGLVLEHSTKAPLHQQAAFRDRCFVSSRACYSSALDILYSSC.

The span at 1 to 10 shows a compositional bias: basic and acidic residues; sequence MDEDKGKRDP. The interval 1–53 is disordered; it reads MDEDKGKRDPIQMSLKGCRTNNGFVQNEDIPEQDPDPGSRDTPQPNAVSIPAP. At 1–88 the chain is on the cytoplasmic side; the sequence is MDEDKGKRDP…ARYRVPREIL (88 aa). Residues 89-109 traverse the membrane as a helical; Signal-anchor for type II membrane protein segment; the sequence is FWLTVVSVFLLIGATIAIIVI. At 110-685 the chain is on the extracellular side; the sequence is SPKCLDWWQA…SALDILYSSC (576 aa). Residue asparagine 213 coordinates Ca(2+). Residues asparagine 213, asparagine 240, and asparagine 260 are each glycosylated (N-linked (GlcNAc...) asparagine). Cysteines 241 and 272 form a disulfide. Ca(2+)-binding residues include aspartate 283, phenylalanine 317, leucine 318, and glutamate 320. Asparagine 331 is a glycosylation site (N-linked (GlcNAc...) asparagine). Serine 385 bears the Phosphoserine mark. Asparagine 512 and asparagine 522 each carry an N-linked (GlcNAc...) asparagine glycan. 2 disulfides stabilise this stretch: cysteine 570-cysteine 666 and cysteine 673-cysteine 685.

Disulfide-linked heterodimer composed of the catalytic light subunit SLC7A9 and the heavy subunit SLC3A1. The heterodimer is the minimal functional unit. Assembles in non-covalently linked heterotetramers (dimers of heterodimers) and higher order oligomers; the oligomerization is mediated by SLC3A1 likely to prevent degradation in the endoplasmic reticulum and facilitate heteromer trafficking to the plasma membrane. Disulfide-linked heterodimer composed of the catalytic light subunit SLC7A13 and the heavy subunit SLC3A1. As to expression, expressed in the brush border membrane in the kidney (at protein level). Highly expressed in renal tubules in the outer stripe of the outer medulla and medullary ray (at protein level). Also detected in the renal cortex. More abundant in male than female kidneys.

The protein localises to the cell membrane. It is found in the apical cell membrane. Functionally, acts as a chaperone that facilitates biogenesis and trafficking of functional transporter heteromers to the plasma membrane. Associates with SLC7A9 to form a functional transporter complex that mediates the electrogenic exchange between cationic amino acids and neutral amino acids, with a stoichiometry of 1:1. SLC7A9-SLC3A1 transporter has system b(0,+)-like activity with high affinity for extracellular cationic amino acids and L-cystine and lower affinity for intracellular neutral amino acids. Substrate exchange is driven by high concentration of intracellular neutral amino acids and the intracellular reduction of L-cystine to L-cysteine. SLC7A9-SLC3A1 acts as a major transporter for reabsorption of L-cystine and dibasic amino acids across the brush border membrane in early proximal tubules. Associates with SLC7A13 to form a functional complex that transports anionic and neutral amino acids via exchange or facilitated diffusion. SLC7A13-SLC3A1 may act as a major transporter for L-cystine in late proximal tubules, ensuring its reabsorption from the luminal fluid in exchange for cytosolic L-glutamate or L-aspartate. The polypeptide is Amino acid transporter heavy chain SLC3A1 (Mus musculus (Mouse)).